Here is a 378-residue protein sequence, read N- to C-terminus: uncharacterized protein (378 aa).

The protein belongs to the IIV-6 329R family.

This is an uncharacterized protein from Acheta domesticus (House cricket).